Consider the following 509-residue polypeptide: DAP3-binding cell death enhancer 1 (509 aa).

Residues Met1–Ile23 constitute a mitochondrion transit peptide. 2 disordered regions span residues Gly19–Asp60 and Val143–Leu185. Residues Thr24–Gln101 constitute a propeptide, extended MTS. A compositionally biased stretch (polar residues) spans Lys26–Leu40. Basic and acidic residues-rich tracts occupy residues Asn46–Asp60 and Gly156–Ala168. 7 TPR repeats span residues Ala213–Val245, Ala246–Ser278, Lys279–His313, Ser314–Leu351, Thr352–Asp385, Ser386–Pro423, and Ala470–Ser498. The SIFI-degron signature appears at Leu307 to Gln326.

It belongs to the DELE1 family. As to quaternary structure, interacts with DAP3. In terms of assembly, interacts (via TPR repeats) with EIF2AK1/HRI; activating the protein kinase activity of EIF2AK1/HRI, thereby promoting the integrated stress response (ISR). Homooctamer; oligomerization is required to activate EIF2AK1/HRI. Interacts (via TPR repeats) with EIF2AK1/HRI; activating the protein kinase activity of EIF2AK1/HRI, thereby promoting the integrated stress response (ISR). Unstable protein in absence of stress: imported in the mitochondrial matrix following processing by the mitochondrial-processing peptidase (MPP), where it is degraded by LONP1. Stabilized in response to iron deficiency: iron deficiency impairs mitochondrial import, promoting localization at the mitochondrial surface and stabilization. Cleaved by OMA1 in response to mitochondrial stress, generating the DAP3-binding cell death enhancer 1 short form (DELE1(S) or S-DELE1) that accumulates in the cytosol and activates the protein kinase activity of EIF2AK1/HRI. Protein cleavage by OMA1 can take place at different positions, and apparently does not require a specific sequence motif. Post-translationally, ubiquitinated and degraded by the SIFI complex once the mitochondrial stress has been resolved, thereby providing stress response silencing. Within the SIFI complex, UBR4 initiates ubiquitin chain that are further elongated or branched by KCMF1.

Its subcellular location is the mitochondrion. The protein resides in the mitochondrion outer membrane. It localises to the mitochondrion inner membrane. The protein localises to the cytoplasm. It is found in the cytosol. In terms of biological role, protein kinase activator that acts as a key activator of the integrated stress response (ISR) following various stresses, such as iron deficiency, mitochondrial stress or mitochondrial DNA breaks. Detects impaired protein import and processing in mitochondria, activating the ISR. May also required for the induction of death receptor-mediated apoptosis through the regulation of caspase activation. Its function is as follows. Protein kinase activator that activates the ISR in response to iron deficiency: iron deficiency impairs mitochondrial import, promoting DELE1 localization at the mitochondrial surface, where it binds and activates EIF2AK1/HRI to trigger the ISR. Functionally, protein kinase activator generated by protein cleavage in response to mitochondrial stress, which accumulates in the cytosol and specifically binds to and activates the protein kinase activity of EIF2AK1/HRI. It thereby activates the integrated stress response (ISR): EIF2AK1/HRI activation promotes eIF-2-alpha (EIF2S1) phosphorylation, leading to a decrease in global protein synthesis and the induction of selected genes, including the transcription factor ATF4, the master transcriptional regulator of the ISR. Also acts as an activator of PRKN-independent mitophagy: activates the protein kinase activity of EIF2AK1/HRI in response to mitochondrial damage, promoting eIF-2-alpha (EIF2S1) phosphorylation, leading to mitochondrial localization of EIF2S1 followed by induction of mitophagy. This Rattus norvegicus (Rat) protein is DAP3-binding cell death enhancer 1.